The following is a 438-amino-acid chain: Nudix hydrolase 19, chloroplastic (438 aa).

A chloroplast-targeting transit peptide spans 1–36 (MLALFLSSSSYPTLSFLSRSVTLNLARTTTLSALTM). Zn(2+)-binding residues include Cys-212, Cys-215, Cys-230, and Cys-235. Residues Tyr-240, 276 to 278 (AGF), Glu-292, Glu-296, and Glu-342 each bind substrate. Residues 241-371 (PRVDPVVIML…EYRKAQRTAA (131 aa)) form the Nudix hydrolase domain. Mg(2+) contacts are provided by Ala-276, Glu-292, Glu-296, and Glu-342. The Nudix box motif lies at 277–298 (GFIEPGESLEEAVRRETWEETG). Residues 422–424 (PDD) carry the Microbody targeting signal motif.

Belongs to the Nudix hydrolase family. NudC subfamily. It depends on Mg(2+) as a cofactor. Zn(2+) serves as cofactor. In terms of tissue distribution, expressed in roots, leaves, stems and inflorescences.

It localises to the plastid. The protein resides in the chloroplast. The enzyme catalyses a 5'-end NAD(+)-phospho-ribonucleoside in mRNA + H2O = a 5'-end phospho-adenosine-phospho-ribonucleoside in mRNA + beta-nicotinamide D-ribonucleotide + 2 H(+). It catalyses the reaction NAD(+) + H2O = beta-nicotinamide D-ribonucleotide + AMP + 2 H(+). It carries out the reaction NADH + H2O = reduced beta-nicotinamide D-ribonucleotide + AMP + 2 H(+). In terms of biological role, mRNA decapping enzyme that specifically removes the nicotinamide adenine dinucleotide (NAD) cap from a subset of mRNAs by hydrolyzing the diphosphate linkage to produce nicotinamide mononucleotide (NMN) and 5' monophosphate mRNA. The NAD-cap is present at the 5'-end of some RNAs; in contrast to the canonical N7 methylguanosine (m7G) cap, the NAD cap promotes mRNA decay. Mediates the hydrolysis of some nucleoside diphosphate derivatives. Has a high affinity for NADPH compared with that for NADH. The sequence is that of Nudix hydrolase 19, chloroplastic (NUDT19) from Arabidopsis thaliana (Mouse-ear cress).